Here is a 177-residue protein sequence, read N- to C-terminus: GTP-dependent dephospho-CoA kinase (177 aa).

Positions 48, 49, 50, 67, 69, 124, and 147 each coordinate GTP.

Belongs to the GTP-dependent DPCK family.

It carries out the reaction 3'-dephospho-CoA + GTP = GDP + CoA + H(+). It functions in the pathway cofactor biosynthesis; coenzyme A biosynthesis. Its function is as follows. Catalyzes the GTP-dependent phosphorylation of the 3'-hydroxyl group of dephosphocoenzyme A to form coenzyme A (CoA). The protein is GTP-dependent dephospho-CoA kinase of Thermococcus onnurineus (strain NA1).